The sequence spans 101 residues: Biogenesis of lysosome-related organelles complex 1 subunit SNN1 (101 aa).

Residues 62 to 100 (DSNEYKAQFKEVNNLQKRLQKITLRLKDLERRSSQLTTS) are a coiled coil.

Belongs to the SNAPIN family. As to quaternary structure, component of the biogenesis of lysosome-related organelles complex-1 (BLOC-1).

The protein localises to the endosome. Component of the biogenesis of lysosome-related organelles complex-1 (BLOC-1), a complex involved in endosomal cargo sorting. This Candida glabrata (strain ATCC 2001 / BCRC 20586 / JCM 3761 / NBRC 0622 / NRRL Y-65 / CBS 138) (Yeast) protein is Biogenesis of lysosome-related organelles complex 1 subunit SNN1 (SNN1).